The chain runs to 175 residues: Large ribosomal subunit protein uL10 (175 aa).

It belongs to the universal ribosomal protein uL10 family. Part of the ribosomal stalk of the 50S ribosomal subunit. The N-terminus interacts with L11 and the large rRNA to form the base of the stalk. The C-terminus forms an elongated spine to which L12 dimers bind in a sequential fashion forming a multimeric L10(L12)X complex.

Forms part of the ribosomal stalk, playing a central role in the interaction of the ribosome with GTP-bound translation factors. The sequence is that of Large ribosomal subunit protein uL10 from Prochlorococcus marinus (strain AS9601).